The chain runs to 845 residues: SLIT and NTRK-like protein 2 (845 aa).

An N-terminal signal peptide occupies residues 1–21 (MLSGVWFLSVLTVAGILQTES). The Extracellular portion of the chain corresponds to 22–621 (RKTAKDICKI…LHTEVPLSVL (600 aa)). 2 disulfides stabilise this stretch: Cys-29–Cys-35 and Cys-33–Cys-46. LRR repeat units lie at residues 63 to 84 (RIYQLFLNGNLLTRLYPNEFVN), 87 to 108 (NAVTLHLGNNGLQEIRTGAFSG), 111 to 132 (TLKRLHLNNNKLEILREDTFLG), 135 to 156 (SLEYLQADYNYISAIEAGAFSK), 159 to 180 (KLKVLILNDNLLLSLPSNVFRF), and 182 to 203 (LLTHLDLRGNRLKVMPFAGVLE). Asn-84 carries an N-linked (GlcNAc...) asparagine glycan. The tract at residues 167-215 (DNLLLSLPSNVFRFVLLTHLDLRGNRLKVMPFAGVLEHIGGIMEIQLEE) is required for interaction with PTPRD. An LRRCT 1 domain is found at 216–265 (NPWNCTCDLLPLKAWLDTITVFVGEIVCETPFRLHGKDVTQLTRQDLCPR). 2 disulfide bridges follow: Cys-220-Cys-243 and Cys-222-Cys-263. The tract at residues 263 to 321 (CPRKSASDSSQRGSHADTHVQRLSPTMNPALNPTRAPKASRPPKMRNRPTPRVTVSKDR) is disordered. Polar residues predominate over residues 283–293 (QRLSPTMNPAL). The LRRNT domain occupies 331–373 (QTKSPVPLTCPSSCVCTSQSSDNGLNVNCQERKFTNISDLQPK). LRR repeat units lie at residues 376–397 (SPKKLYLTGNYLQTVYKNDLLE), 400–421 (SLDLLHLGNNRIAVIQEGAFTN), 424–445 (SLRRLYLNGNYLEVLYPSMFDG), 448–469 (SLQYLYLEYNVIKEIKPLTFDA), 472–493 (NLQLLFLNNNLLRSLPDNIFGG), and 495–516 (ALTRLNLRNNHFSHLPVKGVLD). N-linked (GlcNAc...) asparagine glycosylation occurs at Asn-421. The LRRCT 2 domain maps to 529–580 (NPWDCTCDIMGLKDWTEHANSPVIINEVTCESPAKHAGEILKFLGREAICPD). The helical transmembrane segment at 622-642 (ILGLLVVFILSVCFGAGLFVF) threads the bilayer. Residues 643 to 845 (VLKRRKGVPS…LEKQTAISQL (203 aa)) are Cytoplasmic-facing. Tyr-756 bears the Phosphotyrosine mark.

It belongs to the SLITRK family. As to quaternary structure, interacts with PTPRD; this interaction is PTPRD splicing-dependent and may induce pre-synaptic differentiation. Interacts with NTRK2. In terms of tissue distribution, expressed predominantly in the cerebral cortex of the brain but also at low levels in the spinal cord and medulla. Also expressed in some astrocytic brain tumors such as astrocytomas, oligodendrogliomas, glioblastomas, gangliogliomas and primitive neuroectodermal tumors.

It is found in the membrane. It localises to the cell membrane. The protein localises to the cell projection. Its subcellular location is the dendrite. Functionally, it is involved in synaptogenesis and promotes excitatory synapse differentiation. Suppresses neurite outgrowth. Involved in the negative regulation of NTRK2. In Homo sapiens (Human), this protein is SLIT and NTRK-like protein 2 (SLITRK2).